Reading from the N-terminus, the 1059-residue chain is MALQLGKKLAQVLGSGAGSPLTPGTMEPCAAGSGSPLANGELFNVSKAKKVELQNLSSRFTAAVTQTPPGVTSSTPNESGVTGPAGPLGATTSSPSLETQSTVIISFKSSQTPVQSQTNSAASENVEDDTAPLPLPPPPPGFGTPTTPLLSSNVLKKVASFTVEKSSAGNNSSNPPNLCPTSDETTLLATPCSSSLTVATLPPEIAVGAAAGGVAGGAGSRRGSSYVPEKLSFAAYEKFEGQMLIKWLISTMQSNPKSSSGDANQELFNTLALQFCNNLKYVGVLKQISNEHLDCGFSPYEMYQWTHTEQPTTSLPLTPGKLDKVAAWPFSSTPSGIRALESASLASLGAGGVAGSLATIATASTASSDNQKTLQQILKKRLLNCTTLAEVHAVVNELLSSVDEPPRRPSKRCVNLTELLNASEATVYEYNKTGAEGCVKSFTDAETQTESEDCEGTCKCGQSSTKVSDNESAKEDGEKPHAVAPPPPPPPPPLHAFVAPPPPPPPPPPPPPPLANYGAPPPPPPPPPGSGSAPPPPPPAPIEGGGGIPPPPPPMSASPSKTTISPAPLPDPAEGNWFHRTNTMRKSAVNPPKPMRPLYWTRIVTSAPPAPRPPSVANSTDSTENSGSSPDEPPAANGADAPPTAPPATKEIWTEIEETPLDNIDEFTELFSRQAIAPVSKPKELKVKRAKSIKVLDPERSRNVGIIWRSLHVPSSEIEHAIYHIDTSVVSLEALQHMSNIQATEDELQRIKEAAGGDIPLDHPEQFLLDISLISMASERISCIVFQAEFEESVTLLFRKLETVSQLSQQLIESEDLKLVFSIILTLGNYMNGGNRQRGQADGFNLDILGKLKDVKSKESHTTLLHFIVRTYIAQRRKEGVHPLEIRLPIPEPADVERAAQMDFEEVQQQIFDLNKKFLGCKRTTAKVLAASRPEIMEPFKSKMEEFVEGADKSMAKLHQSLDECRDLFLETMRFYHFSPKACTLTLAQCTPDQFFEYWTNFTNDFKDIWKKEITSLLNELMKKSKQAQIESRRNVSTKVEKSGRISLKERMLMRRSKN.

2 stretches are compositionally biased toward polar residues: residues 62-80 (AAVTQTPPGVTSSTPNESG) and 90-123 (ATTSSPSLETQSTVIISFKSSQTPVQSQTNSAAS). Disordered stretches follow at residues 62–146 (AAVT…GTPT) and 448–647 (QTES…TAPP). Residues 133 to 142 (LPLPPPPPGF) show a composition bias toward pro residues. A compositionally biased stretch (basic and acidic residues) spans 468-481 (SDNESAKEDGEKPH). Positions 480–560 (PHAVAPPPPP…PPPPMSASPS (81 aa)) constitute an FH1 domain. Residues 483-541 (VAPPPPPPPPPLHAFVAPPPPPPPPPPPPPPLANYGAPPPPPPPPPGSGSAPPPPPPAP) show a composition bias toward pro residues. The 448-residue stretch at 585–1032 (RKSAVNPPKP…KKSKQAQIES (448 aa)) folds into the FH2 domain. The segment covering 620 to 629 (TDSTENSGSS) has biased composition (polar residues). The interval 1049-1059 (KERMLMRRSKN) is important for interaction with spir.

This sequence belongs to the formin homology family. Cappuccino subfamily. Interacts with wash. Interacts with spir.

It localises to the cytoplasm. Its subcellular location is the cytoskeleton. The protein resides in the cytosol. The protein localises to the membrane. It is found in the cytoplasmic vesicle membrane. In terms of biological role, acts as an actin nucleation factor and promotes assembly of actin filaments together with spir. May play a role in intracellular vesicle transport along actin fibers, providing a novel link between actin cytoskeleton dynamics and intracellular transport. The sequence is that of Protein cappuccino (capu) from Drosophila melanogaster (Fruit fly).